The sequence spans 109 residues: Elicitor peptide 2 (109 aa).

The propeptide occupies 1 to 73; sequence MEKLDKRREE…KDDDVVVLLR (73 aa). Positions 74 to 88 are enriched in basic and acidic residues; the sequence is DNKAKSKKRDKEKPS. Residues 74-109 form a disordered region; the sequence is DNKAKSKKRDKEKPSSGRPGQTNSVPNAAIQVYKED.

Belongs to the brassicaceae elicitor peptide family.

Its function is as follows. Elicitor of plant defense. The protein is Elicitor peptide 2 (PEP2) of Arabidopsis thaliana (Mouse-ear cress).